The chain runs to 259 residues: Dolichol-phosphate mannosyltransferase subunit 1 (259 aa).

The residue at position 2 (Ala2) is an N-acetylalanine. Residue Ser3 is modified to Phosphoserine. Residues Pro31, Tyr33, Glu35, Ile62, Asp64, Asp117, Ala118, Asp119, Arg146, Arg233, and Lys239 each contribute to the GDP-alpha-D-mannose site. Asp119 provides a ligand contact to Mg(2+). Asp119 is a binding site for Mn(2+).

It belongs to the glycosyltransferase 2 family. In terms of assembly, component of the dolichol-phosphate mannose (DPM) synthase complex composed of DPM1, DPM2 and DPM3; within the complex, directly interacts with DPM3. This interaction may stabilize DPM1. Mg(2+) is required as a cofactor. It depends on Mn(2+) as a cofactor. Requires Ca(2+) as cofactor.

It is found in the endoplasmic reticulum. It carries out the reaction a di-trans,poly-cis-dolichyl phosphate + GDP-alpha-D-mannose = a di-trans,poly-cis-dolichyl beta-D-mannosyl phosphate + GDP. The protein operates within protein modification; protein glycosylation. Its function is as follows. Transfers mannose from GDP-mannose to dolichol monophosphate to form dolichol phosphate mannose (Dol-P-Man) which is the mannosyl donor in pathways leading to N-glycosylation, glycosyl phosphatidylinositol membrane anchoring, and O-mannosylation of proteins; catalytic subunit of the dolichol-phosphate mannose (DPM) synthase complex. The chain is Dolichol-phosphate mannosyltransferase subunit 1 (DPM1) from Sus scrofa (Pig).